A 364-amino-acid chain; its full sequence is Fructose-bisphosphate aldolase C (364 aa).

Tyr-5 is subject to Phosphotyrosine. A phosphoserine mark is found at Ser-36, Ser-39, and Ser-45. Residue Arg-56 coordinates substrate. The residue at position 111 (Lys-111) is an N6-acetyllysine. Ser-132 is modified (phosphoserine). Residue Lys-147 coordinates substrate. Glu-188 functions as the Proton acceptor in the catalytic mechanism. The active-site Schiff-base intermediate with dihydroxyacetone-P is the Lys-230.

It belongs to the class I fructose-bisphosphate aldolase family. As to quaternary structure, homotetramer. Interacts with ATP6V1E1.

The catalysed reaction is beta-D-fructose 1,6-bisphosphate = D-glyceraldehyde 3-phosphate + dihydroxyacetone phosphate. It functions in the pathway carbohydrate degradation; glycolysis; D-glyceraldehyde 3-phosphate and glycerone phosphate from D-glucose: step 4/4. The sequence is that of Fructose-bisphosphate aldolase C (ALDOC) from Pan troglodytes (Chimpanzee).